A 196-amino-acid polypeptide reads, in one-letter code: Putative archaetidylserine decarboxylase proenzyme (196 aa).

S164 (schiff-base intermediate with substrate; via pyruvic acid) is an active-site residue. At S164 the chain carries Pyruvic acid (Ser); by autocatalysis.

This sequence belongs to the phosphatidylserine decarboxylase family. PSD-A subfamily. As to quaternary structure, heterodimer of a large membrane-associated beta subunit and a small pyruvoyl-containing alpha subunit. Pyruvate is required as a cofactor. In terms of processing, is synthesized initially as an inactive proenzyme. Formation of the active enzyme involves a self-maturation process in which the active site pyruvoyl group is generated from an internal serine residue via an autocatalytic post-translational modification. Two non-identical subunits are generated from the proenzyme in this reaction, and the pyruvate is formed at the N-terminus of the alpha chain, which is derived from the carboxyl end of the proenzyme. The post-translation cleavage follows an unusual pathway, termed non-hydrolytic serinolysis, in which the side chain hydroxyl group of the serine supplies its oxygen atom to form the C-terminus of the beta chain, while the remainder of the serine residue undergoes an oxidative deamination to produce ammonia and the pyruvoyl prosthetic group on the alpha chain.

Its subcellular location is the cell membrane. The enzyme catalyses archaetidylserine + H(+) = archaetidylethanolamine + CO2. In terms of biological role, catalyzes the formation of archaetidylethanolamine (PtdEtn) from archaetidylserine (PtdSer). This is Putative archaetidylserine decarboxylase proenzyme from Halobacterium salinarum (strain ATCC 700922 / JCM 11081 / NRC-1) (Halobacterium halobium).